A 452-amino-acid chain; its full sequence is Scaffold protein ILK (452 aa).

ANK repeat units lie at residues 2–30 (DDIF…LNQG), 31–63 (DDHG…INVM), 64–96 (NRGD…INAV), 97–129 (NEHG…VSIA), and 130–174 (NKYS…GTTR). Positions 193–446 (LSLSQKLNEN…PKFDMIVPIL (254 aa)) constitute a Protein kinase domain. 6 residues coordinate ATP: N200, N202, S204, H270, M272, and N279. D339 contacts Mg(2+). Residue K341 coordinates ATP. Residues 363-371 (KKPEEINRR) carry the Nuclear localization signal motif.

This sequence belongs to the protein kinase superfamily. TKL Ser/Thr protein kinase family. In terms of assembly, interacts with PXN/PAXILLIN (via LD motif 4).

The protein resides in the cell junction. It is found in the focal adhesion. Its subcellular location is the cell membrane. The protein localises to the cell projection. It localises to the lamellipodium. The protein resides in the cytoplasm. It is found in the myofibril. Its subcellular location is the sarcomere. The protein localises to the nucleus. It localises to the cytoskeleton. The protein resides in the microtubule organizing center. It is found in the centrosome. Its subcellular location is the cell cortex. Functionally, scaffold protein which mediates protein-protein interactions during a range of cellular events including focal adhesion assembly, cell adhesion and cell migration. This Gallus gallus (Chicken) protein is Scaffold protein ILK.